Here is a 324-residue protein sequence, read N- to C-terminus: Viral cathepsin (324 aa).

A signal peptide spans 1–16 (MNKIVLYLLVYGAVQC). Residues 17–113 (AAYDVLKAPN…VVLDRPPDKG (97 aa)) constitute a propeptide, activation peptide. 3 disulfide bridges follow: cysteine 134–cysteine 175, cysteine 168–cysteine 208, and cysteine 263–cysteine 311. Cysteine 137 is an active-site residue. N-linked (GlcNAc...) asparagine; by host glycosylation occurs at asparagine 159. Residues histidine 270 and asparagine 290 contribute to the active site.

It belongs to the peptidase C1 family. In terms of processing, synthesized as an inactive proenzyme and activated by proteolytic removal of the inhibitory propeptide.

It carries out the reaction Endopeptidase of broad specificity, hydrolyzing substrates of both cathepsin L and cathepsin B.. In terms of biological role, cysteine protease that plays an essential role in host liquefaction to facilitate horizontal transmission of the virus. May participate in the degradation of foreign protein expressed by the baculovirus system. This Choristoneura fumiferana nuclear polyhedrosis virus (CfMNPV) protein is Viral cathepsin (Vcath).